We begin with the raw amino-acid sequence, 201 residues long: Small ribosomal subunit protein uS4c (201 aa).

The interval 23–42 is disordered; the sequence is SKKPRAGSNLRNQLRPGKKS. The S4 RNA-binding domain occupies 89–151; that stretch reads MRLDNILFRL…QKSKSLVQNY (63 aa).

The protein belongs to the universal ribosomal protein uS4 family. As to quaternary structure, part of the 30S ribosomal subunit. Contacts protein S5. The interaction surface between S4 and S5 is involved in control of translational fidelity.

The protein resides in the plastid. Its subcellular location is the chloroplast. In terms of biological role, one of the primary rRNA binding proteins, it binds directly to 16S rRNA where it nucleates assembly of the body of the 30S subunit. With S5 and S12 plays an important role in translational accuracy. The polypeptide is Small ribosomal subunit protein uS4c (rps4) (Morus indica (Mulberry)).